A 778-amino-acid chain; its full sequence is Kin of IRRE-like protein 3 (778 aa).

The first 21 residues, 1 to 21, serve as a signal peptide directing secretion; the sequence is MRPFQLDLLFLCFFLFSQELG. Residues 22–535 lie on the Extracellular side of the membrane; it reads LQKRGCCLVL…GLEAESVPMA (514 aa). Ig-like C2-type domains are found at residues 48-142, 147-243, 249-330, 335-415, and 419-515; these read YSFS…ARLT, PDDP…TSVT, PPLV…RTVD, PRMT…VTLT, and PPII…IRLK. Cys-69 and Cys-127 are joined by a disulfide. N-linked (GlcNAc...) asparagine glycosylation is present at Asn-167. Cys-170 and Cys-227 form a disulfide bridge. N-linked (GlcNAc...) asparagine glycosylation is present at Asn-253. An intrachain disulfide couples Cys-271 to Cys-314. N-linked (GlcNAc...) asparagine glycosylation occurs at Asn-324. Disulfide bonds link Cys-356/Cys-398 and Cys-440/Cys-499. A glycan (N-linked (GlcNAc...) asparagine) is linked at Asn-498. The helical transmembrane segment at 536-556 threads the bilayer; sequence VIIGVAVGAGVAFLVLMATIV. Residues 557–778 are Cytoplasmic-facing; it reads AFCCARSQRN…PLQRRMQTHV (222 aa). A compositionally biased stretch (polar residues) spans 727-736; it reads CDSSVSSSGK. Positions 727 to 778 are disordered; sequence CDSSVSSSGKQDGYVQFDKASKASASSSHHSQSSSQNSDPSRPLQRRMQTHV. The span at 748–762 shows a compositional bias: low complexity; it reads KASASSSHHSQSSSQ.

The protein belongs to the immunoglobulin superfamily. As to quaternary structure, homodimer; mediates homophilic interactions to promote cell adhesion. Interacts with NPHS1; forms heterodimers with NPHS1. Interacts with NPHS2/podocin (via the C-terminus). Interacts with CASK. Interacts (via extracellular region) with MAP1B. Interacts (via extracellular region) with MYO16. Interacts (via intracellular region) with ATP1B1. Interacts (via intracellular region) with SHMT2. Interacts (via intracellular region) with UFC1. Undergoes proteolysis by a metalloprotease and gives rise to a soluble form. Expressed mainly in adult brain, bone marrow and stromal cells. Expressed in diverse regions of the brain, including the cortex, hippocampus, striatum, olfactory bulb and cerebellum. In brain, expressed in pontine nucleus neurons (at protein level). In hippocampus, produced in both the dentate granule neurons and the GABAergic neurons, but not the CA3 neurons. Expressed in subpopulations of vomeronasal sensory neurons. Expressed in a subset of neurons in dorsal root ganglia.

It localises to the cell membrane. Its subcellular location is the cell projection. The protein resides in the axon. It is found in the dendrite. The protein localises to the secreted. Its function is as follows. Synaptic adhesion molecule required for the formation of target-specific synapses. Required for formation of target-specific synapses at hippocampal mossy fiber synapses. Required for formation of mossy fiber filopodia, the synaptic structures connecting dentate granule and GABA neurons. Probably acts as a homophilic adhesion molecule that promotes trans-cellular interactions and stabilize mossy fiber filipodia contact and subsequent synapse formation. Required for the coalescence of vomeronasal sensory neuron axons. May be involved in the hematopoietic supportive capacity of stroma cells; the secreted extracellular domain is directly responsible for supporting hematopoietic stem cells. In Mus musculus (Mouse), this protein is Kin of IRRE-like protein 3 (Kirrel3).